The sequence spans 464 residues: UNC93-like protein 3 (464 aa).

The next 11 helical transmembrane spans lie at 31 to 51 (VHILSISFLLIFLAYGAAQNL), 62 to 82 (ISLGILYVSFMFCSMVASLVV), 84 to 104 (LMGSKNALVLGTTGYWLFVAA), 110 to 130 (WFTMVPASLYLGFAASIIWVG), 160 to 180 (EFWAMFACHQLFGNLITLALL), 192 to 212 (TLLMLVFLFSMTLGTILMFFI), 251 to 271 (LLIVPLLAYSGLQQAFVWAEF), 275 to 295 (IVTPAIGVSGVGGAMAVYGAL), 313 to 333 (ITFIVSGGAVAQASVFLWLLL), 341 to 361 (VLGTAYPLIMAAILGIGDGIL), and 392 to 412 (IAIVFFLSPYISLQAMLIVML).

Belongs to the unc-93 family.

Its subcellular location is the membrane. The polypeptide is UNC93-like protein 3 (Arabidopsis thaliana (Mouse-ear cress)).